A 339-amino-acid chain; its full sequence is Anthranilate phosphoribosyltransferase (339 aa).

5-phospho-alpha-D-ribose 1-diphosphate contacts are provided by residues glycine 80, 83–84 (GD), threonine 88, 90–93 (NIST), 108–116 (KHGNRAMSS), and serine 120. Residue glycine 80 coordinates anthranilate. Serine 92 is a binding site for Mg(2+). Position 111 (asparagine 111) interacts with anthranilate. Arginine 166 provides a ligand contact to anthranilate. Mg(2+)-binding residues include aspartate 225 and glutamate 226.

The protein belongs to the anthranilate phosphoribosyltransferase family. Homodimer. Mg(2+) serves as cofactor.

The catalysed reaction is N-(5-phospho-beta-D-ribosyl)anthranilate + diphosphate = 5-phospho-alpha-D-ribose 1-diphosphate + anthranilate. The protein operates within amino-acid biosynthesis; L-tryptophan biosynthesis; L-tryptophan from chorismate: step 2/5. In terms of biological role, catalyzes the transfer of the phosphoribosyl group of 5-phosphorylribose-1-pyrophosphate (PRPP) to anthranilate to yield N-(5'-phosphoribosyl)-anthranilate (PRA). The protein is Anthranilate phosphoribosyltransferase of Chloroflexus aurantiacus (strain ATCC 29366 / DSM 635 / J-10-fl).